A 254-amino-acid chain; its full sequence is Leucyl/phenylalanyl-tRNA--protein transferase (254 aa).

The protein belongs to the L/F-transferase family.

The protein resides in the cytoplasm. The catalysed reaction is N-terminal L-lysyl-[protein] + L-leucyl-tRNA(Leu) = N-terminal L-leucyl-L-lysyl-[protein] + tRNA(Leu) + H(+). The enzyme catalyses N-terminal L-arginyl-[protein] + L-leucyl-tRNA(Leu) = N-terminal L-leucyl-L-arginyl-[protein] + tRNA(Leu) + H(+). It catalyses the reaction L-phenylalanyl-tRNA(Phe) + an N-terminal L-alpha-aminoacyl-[protein] = an N-terminal L-phenylalanyl-L-alpha-aminoacyl-[protein] + tRNA(Phe). In terms of biological role, functions in the N-end rule pathway of protein degradation where it conjugates Leu, Phe and, less efficiently, Met from aminoacyl-tRNAs to the N-termini of proteins containing an N-terminal arginine or lysine. This chain is Leucyl/phenylalanyl-tRNA--protein transferase, found in Burkholderia lata (strain ATCC 17760 / DSM 23089 / LMG 22485 / NCIMB 9086 / R18194 / 383).